A 1183-amino-acid polypeptide reads, in one-letter code: SR-related and CTD-associated factor 4 (1183 aa).

In terms of domain architecture, CID spans 1–139; that stretch reads MDAVNAFNQE…PLLDMAAGTS (139 aa). Position 49 is an N6-acetyllysine (Lys49). A Phosphoserine modification is found at Ser154. 2 disordered regions span residues 299–324 and 348–561; these read VPVP…VQQP and HHQV…QIKS. A compositionally biased stretch (pro residues) spans 367 to 380; that stretch reads APPPFPPMPQPGMP. Residues 381 to 398 show a composition bias toward low complexity; sequence QPGMAQPGLAQPGMAQPT. Over residues 399–410 the composition is skewed to pro residues; that stretch reads MPQPGMPQPGMP. Over residues 411-428 the composition is skewed to low complexity; it reads QPGMAQPGLAQPGMAQPG. The segment covering 429-440 has biased composition (pro residues); sequence MPQPAMPQPAMP. Polar residues predominate over residues 457–469; sequence PTFQSTFQPQNEP. The span at 488–498 shows a compositional bias: basic and acidic residues; the sequence is EVKRHVPESRK. Basic residues predominate over residues 499–536; the sequence is SRSRSPKRRRSRSGSRSRRSRHRRSRSRSRDRRRHSPR. The segment covering 538-553 has biased composition (basic and acidic residues); that stretch reads RSQERRDREKERERRQ. The region spanning 569–643 is the RRM domain; sequence TTLWVGQLDK…KSIKIAWALN (75 aa). Disordered regions lie at residues 691–722, 800–858, and 920–1183; these read WKGI…IPKP, LPPG…SLPT, and MPPH…EPPR. Residue Ser717 is modified to Phosphoserine. Composition is skewed to pro residues over residues 800–823 and 920–952; these read LPPG…PPIS and MPPH…PPHG. The segment covering 1006–1020 has biased composition (low complexity); it reads SPSQQPAPAQQQPPQ. Ser1042 carries the post-translational modification Phosphoserine. The segment covering 1047–1122 has biased composition (basic and acidic residues); sequence VENDRERYGS…NRKEKHEVAD (76 aa). Residues 1136–1145 are compositionally biased toward polar residues; that stretch reads QVGTIDTVSE.

Interacts with POLR2A; via C-terminal heptapeptide repeat domain (CTD) phosphorylated at 'Ser-2' and 'Ser-5'.

The protein localises to the nucleus. Functionally, anti-terminator protein required to prevent early mRNA termination during transcription. Together with SCAF8, acts by suppressing the use of early, alternative poly(A) sites, thereby preventing the accumulation of non-functional truncated proteins. Mechanistically, associates with the phosphorylated C-terminal heptapeptide repeat domain (CTD) of the largest RNA polymerase II subunit (POLR2A), and subsequently binds nascent RNA upstream of early polyadenylation sites to prevent premature mRNA transcript cleavage and polyadenylation. Independently of SCAF8, also acts as a suppressor of transcriptional readthrough. The chain is SR-related and CTD-associated factor 4 from Mus musculus (Mouse).